Reading from the N-terminus, the 162-residue chain is NADH-quinone oxidoreductase subunit I (162 aa).

4Fe-4S ferredoxin-type domains lie at 54–83 and 93–122; these read RRYENGEERCIACKLCEVVCPALAITINST and SSYEIDLFKCIFCGYCEESCPVDSIVETNI. [4Fe-4S] cluster-binding residues include cysteine 63, cysteine 66, cysteine 69, cysteine 73, cysteine 102, cysteine 105, cysteine 108, and cysteine 112.

Belongs to the complex I 23 kDa subunit family. In terms of assembly, NDH-1 is composed of 14 different subunits. Subunits NuoA, H, J, K, L, M, N constitute the membrane sector of the complex. [4Fe-4S] cluster is required as a cofactor.

The protein resides in the cell inner membrane. The enzyme catalyses a quinone + NADH + 5 H(+)(in) = a quinol + NAD(+) + 4 H(+)(out). Functionally, NDH-1 shuttles electrons from NADH, via FMN and iron-sulfur (Fe-S) centers, to quinones in the respiratory chain. The immediate electron acceptor for the enzyme in this species is believed to be ubiquinone. Couples the redox reaction to proton translocation (for every two electrons transferred, four hydrogen ions are translocated across the cytoplasmic membrane), and thus conserves the redox energy in a proton gradient. This is NADH-quinone oxidoreductase subunit I from Francisella tularensis subsp. holarctica (strain FTNF002-00 / FTA).